Here is a 235-residue protein sequence, read N- to C-terminus: UPF0502 protein Bmul_3231/BMULJ_05293 (235 aa).

It belongs to the UPF0502 family.

In Burkholderia multivorans (strain ATCC 17616 / 249), this protein is UPF0502 protein Bmul_3231/BMULJ_05293.